An 86-amino-acid polypeptide reads, in one-letter code: Teretoxin Tsu6.16 (86 aa).

Positions 1–21 are cleaved as a signal peptide; that stretch reads MATSGRLLCVCLVMGLVFESL. Positions 22 to 46 are excised as a propeptide; that stretch reads GYLTGREKRPAENLEASVQRRWYLN.

It belongs to the teretoxin M (TM) superfamily. Contains 3 disulfide bonds. As to expression, expressed by the venom duct.

It is found in the secreted. This is Teretoxin Tsu6.16 from Terebra subulata (Chocolate spotted auger).